The primary structure comprises 147 residues: D-aminoacyl-tRNA deacylase (147 aa).

Positions 137–138 match the Gly-cisPro motif, important for rejection of L-amino acids motif; the sequence is GP.

This sequence belongs to the DTD family. In terms of assembly, homodimer.

The protein resides in the cytoplasm. The catalysed reaction is glycyl-tRNA(Ala) + H2O = tRNA(Ala) + glycine + H(+). The enzyme catalyses a D-aminoacyl-tRNA + H2O = a tRNA + a D-alpha-amino acid + H(+). In terms of biological role, an aminoacyl-tRNA editing enzyme that deacylates mischarged D-aminoacyl-tRNAs. Also deacylates mischarged glycyl-tRNA(Ala), protecting cells against glycine mischarging by AlaRS. Acts via tRNA-based rather than protein-based catalysis; rejects L-amino acids rather than detecting D-amino acids in the active site. By recycling D-aminoacyl-tRNA to D-amino acids and free tRNA molecules, this enzyme counteracts the toxicity associated with the formation of D-aminoacyl-tRNA entities in vivo and helps enforce protein L-homochirality. The protein is D-aminoacyl-tRNA deacylase of Levilactobacillus brevis (strain ATCC 367 / BCRC 12310 / CIP 105137 / JCM 1170 / LMG 11437 / NCIMB 947 / NCTC 947) (Lactobacillus brevis).